Here is a 178-residue protein sequence, read N- to C-terminus: ATP synthase subunit delta (178 aa).

The protein belongs to the ATPase delta chain family. F-type ATPases have 2 components, F(1) - the catalytic core - and F(0) - the membrane proton channel. F(1) has five subunits: alpha(3), beta(3), gamma(1), delta(1), epsilon(1). F(0) has three main subunits: a(1), b(2) and c(10-14). The alpha and beta chains form an alternating ring which encloses part of the gamma chain. F(1) is attached to F(0) by a central stalk formed by the gamma and epsilon chains, while a peripheral stalk is formed by the delta and b chains.

It is found in the cell inner membrane. Its function is as follows. F(1)F(0) ATP synthase produces ATP from ADP in the presence of a proton or sodium gradient. F-type ATPases consist of two structural domains, F(1) containing the extramembraneous catalytic core and F(0) containing the membrane proton channel, linked together by a central stalk and a peripheral stalk. During catalysis, ATP synthesis in the catalytic domain of F(1) is coupled via a rotary mechanism of the central stalk subunits to proton translocation. Functionally, this protein is part of the stalk that links CF(0) to CF(1). It either transmits conformational changes from CF(0) to CF(1) or is implicated in proton conduction. This chain is ATP synthase subunit delta, found in Polynucleobacter necessarius subsp. necessarius (strain STIR1).